The chain runs to 293 residues: 4-hydroxy-tetrahydrodipicolinate synthase (293 aa).

Pyruvate is bound at residue threonine 45. The active-site Proton donor/acceptor is tyrosine 133. The active-site Schiff-base intermediate with substrate is lysine 161. Residue isoleucine 203 coordinates pyruvate.

Belongs to the DapA family. Homotetramer; dimer of dimers.

It is found in the cytoplasm. It catalyses the reaction L-aspartate 4-semialdehyde + pyruvate = (2S,4S)-4-hydroxy-2,3,4,5-tetrahydrodipicolinate + H2O + H(+). The protein operates within amino-acid biosynthesis; L-lysine biosynthesis via DAP pathway; (S)-tetrahydrodipicolinate from L-aspartate: step 3/4. Its function is as follows. Catalyzes the condensation of (S)-aspartate-beta-semialdehyde [(S)-ASA] and pyruvate to 4-hydroxy-tetrahydrodipicolinate (HTPA). This Aliivibrio salmonicida (strain LFI1238) (Vibrio salmonicida (strain LFI1238)) protein is 4-hydroxy-tetrahydrodipicolinate synthase.